The chain runs to 517 residues: Dopamine receptor 4 (517 aa).

Over M1–A46 the chain is Extracellular. N25 carries an N-linked (GlcNAc...) asparagine glycan. Residues I47–V67 form a helical membrane-spanning segment. The Cytoplasmic portion of the chain corresponds to C68–T77. The helical transmembrane segment at G78–M98 threads the bilayer. Residues N99–T108 are Extracellular-facing. N106 is a glycosylation site (N-linked (GlcNAc...) asparagine). The chain crosses the membrane as a helical span at residues W109 to A129. Residues S130 to R159 lie on the Cytoplasmic side of the membrane. A helical membrane pass occupies residues I160–I180. Residues W181 to S209 are Extracellular-facing. A helical membrane pass occupies residues L210–I230. Residues A231–T409 lie on the Cytoplasmic side of the membrane. The disordered stretch occupies residues N309–S339. A helical membrane pass occupies residues L410 to L430. At T431–E442 the chain is on the extracellular side. The chain crosses the membrane as a helical span at residues T443–Y463. Residues S464–E517 lie on the Cytoplasmic side of the membrane.

This sequence belongs to the G-protein coupled receptor 1 family. As to expression, expressed in pharyngeal neurons I1 and I2, neurons ASG, AVL, CAN, PQR, vulva, intestine, rectal glands and rectal epithelial glands. Also expressed in neurons in ray 8 in males.

It localises to the cell membrane. Its function is as follows. Receptor for dopamine. The activity of this receptor is mediated by G proteins which activate adenylyl cyclase. In terms of antagonist responses, would be classed with the D1-like dopamine receptor group. This chain is Dopamine receptor 4 (dop-4), found in Caenorhabditis elegans.